The primary structure comprises 303 residues: Putative S-adenosyl-L-methionine-dependent methyltransferase MSMEG_1479/MSMEI_1443 (303 aa).

Residues aspartate 130 and 159-160 (DL) contribute to the S-adenosyl-L-methionine site.

Belongs to the UPF0677 family.

Functionally, exhibits S-adenosyl-L-methionine-dependent methyltransferase activity. In Mycolicibacterium smegmatis (strain ATCC 700084 / mc(2)155) (Mycobacterium smegmatis), this protein is Putative S-adenosyl-L-methionine-dependent methyltransferase MSMEG_1479/MSMEI_1443.